The following is a 1222-amino-acid chain: Protein SCP160 (1222 aa).

Residues Met-1–Pro-12 show a composition bias toward polar residues. Residues Met-1 to Pro-59 form a disordered region. A compositionally biased stretch (low complexity) spans Ser-13–Thr-38. Residues Ala-39–Pro-49 are compositionally biased toward basic and acidic residues. Residue Thr-50 is modified to Phosphothreonine. 5 positions are modified to phosphoserine: Ser-54, Ser-63, Ser-85, Ser-87, and Ser-89. The tract at residues Lys-79 to Gly-98 is disordered. One can recognise a KH 1 domain in the interval Pro-177 to Ile-249. Position 630 is a phosphoserine (Ser-630). KH domains lie at Lys-634–Leu-702, Ile-712–Leu-771, Gly-782–Val-851, Phe-861–Ile-929, and Ser-939–Ile-1001. Ser-1112 is modified (phosphoserine). The region spanning Tyr-1153–Val-1216 is the KH 7 domain.

It is found in the endoplasmic reticulum membrane. Its subcellular location is the nucleus membrane. Involved in the control of mitotic chromosome transmission. Required during cell division for faithful partitioning of the ER-nuclear envelope membranes which, in S.cerevisiae, enclose the duplicated chromosomes. This is Protein SCP160 (SCP160) from Saccharomyces cerevisiae (strain ATCC 204508 / S288c) (Baker's yeast).